Reading from the N-terminus, the 115-residue chain is uncharacterized protein (115 aa).

Residues Thr90–Arg100 show a composition bias toward basic residues. The disordered stretch occupies residues Thr90–Gly115.

This is an uncharacterized protein from Saccharomyces cerevisiae (strain ATCC 204508 / S288c) (Baker's yeast).